A 324-amino-acid polypeptide reads, in one-letter code: Delta-aminolevulinic acid dehydratase (324 aa).

Residues C120, C122, and C130 each coordinate Zn(2+). Residue K195 is the Schiff-base intermediate with substrate of the active site. The 5-aminolevulinate site is built by R205 and R216. E232 contributes to the Mg(2+) binding site. The active-site Schiff-base intermediate with substrate is K247. Positions 273 and 312 each coordinate 5-aminolevulinate.

This sequence belongs to the ALAD family. As to quaternary structure, homooctamer. Requires Zn(2+) as cofactor.

The catalysed reaction is 2 5-aminolevulinate = porphobilinogen + 2 H2O + H(+). It functions in the pathway porphyrin-containing compound metabolism; protoporphyrin-IX biosynthesis; coproporphyrinogen-III from 5-aminolevulinate: step 1/4. With respect to regulation, allosteric enzyme. Stimulated by magnesium ions. Catalyzes an early step in the biosynthesis of tetrapyrroles. Binds two molecules of 5-aminolevulinate per subunit, each at a distinct site, and catalyzes their condensation to form porphobilinogen. This Escherichia coli (strain K12) protein is Delta-aminolevulinic acid dehydratase (hemB).